We begin with the raw amino-acid sequence, 64 residues long: Large ribosomal subunit protein uL29 (64 aa).

The protein belongs to the universal ribosomal protein uL29 family.

In Cupriavidus metallidurans (strain ATCC 43123 / DSM 2839 / NBRC 102507 / CH34) (Ralstonia metallidurans), this protein is Large ribosomal subunit protein uL29.